Here is a 417-residue protein sequence, read N- to C-terminus: Sulfite reductase, dissimilatory-type subunit alpha (417 aa).

[4Fe-4S] cluster-binding residues include C170, C176, C214, C218, C264, C284, C287, and C290. C218 contributes to the siroheme binding site.

Requires [4Fe-4S] cluster as cofactor. Siroheme is required as a cofactor.

The catalysed reaction is [DsrC protein]-trisulfide + NAD(+) + 3 H2O = [DsrC protein]-dithiol + sulfite + NADH + 3 H(+). In terms of biological role, catalyzes the reduction of sulfite to sulfide. This is the terminal oxidation reaction in sulfate respiration. The protein is Sulfite reductase, dissimilatory-type subunit alpha (dsrA) of Allochromatium vinosum (strain ATCC 17899 / DSM 180 / NBRC 103801 / NCIMB 10441 / D) (Chromatium vinosum).